The primary structure comprises 947 residues: Serine/threonine-protein kinase PKH2 (947 aa).

Over residues 1 to 14 (MHKFRYSLHQHYSK) the composition is skewed to basic residues. Disordered regions lie at residues 1–43 (MHKF…SSSS), 108–132 (SLGN…LSSH), and 162–212 (FNHL…NEEN). The span at 108 to 117 (SLGNTTNETG) shows a compositional bias: polar residues. The span at 187-198 (NTEEEENNDDTD) shows a compositional bias: acidic residues. Over residues 199–212 (EIPKSETLKQNEEN) the composition is skewed to basic and acidic residues. A Protein kinase domain is found at 240–502 (FKFGKELGEG…IPEIQKHYFF (263 aa)). ATP is bound by residues 250 to 252 (SYS) and Lys269. The tract at residues 271 to 316 (LDKRHIIKEKKVKYVNIEKHALNRLSNRLGVISLYFTFQDKDSLYF) is PIF-pocket. Residues 319–321 (DYA) and Glu325 each bind ATP. The Proton acceptor role is filled by Asp364. 2 residues coordinate ATP: Glu368 and Asp382. Composition is skewed to low complexity over residues 550 to 579 (VKKS…KGSS) and 618 to 632 (SSTS…SNSN). 4 disordered regions span residues 550–598 (VKKS…STEK), 611–644 (KPAT…QQDY), 660–686 (SVGS…IHQQ), and 794–816 (NMKR…ASTS). A compositionally biased stretch (basic and acidic residues) spans 802-811 (DSKKSMDIER).

Belongs to the protein kinase superfamily. AGC Ser/Thr protein kinase family. PDPK1 subfamily.

Its subcellular location is the nucleus. It localises to the cytoplasm. It is found in the cell cortex. It carries out the reaction L-seryl-[protein] + ATP = O-phospho-L-seryl-[protein] + ADP + H(+). The enzyme catalyses L-threonyl-[protein] + ATP = O-phospho-L-threonyl-[protein] + ADP + H(+). Its function is as follows. Serine/threonine-protein kinase which is part sphingolipid-mediated signaling pathway that is required for the internalization step of endocytosis by regulating eisosome assembly and organization, and modulating the organization of the plasma membrane. Phosphorylates and activates PKC1. Activates YPK1 and YPK2, 2 components of signaling cascade required for maintenance of cell wall integrity. Required for stress-induced P-body assembly and regulates global mRNA decay at the deadenylation step. The sequence is that of Serine/threonine-protein kinase PKH2 from Candida albicans (strain SC5314 / ATCC MYA-2876) (Yeast).